Consider the following 503-residue polypeptide: Probable cytosol aminopeptidase (503 aa).

Mn(2+) contacts are provided by Lys274 and Asp279. Residue Lys286 is part of the active site. Positions 297, 356, and 358 each coordinate Mn(2+). Arg360 is an active-site residue.

Belongs to the peptidase M17 family. Mn(2+) serves as cofactor.

The protein localises to the cytoplasm. It carries out the reaction Release of an N-terminal amino acid, Xaa-|-Yaa-, in which Xaa is preferably Leu, but may be other amino acids including Pro although not Arg or Lys, and Yaa may be Pro. Amino acid amides and methyl esters are also readily hydrolyzed, but rates on arylamides are exceedingly low.. The enzyme catalyses Release of an N-terminal amino acid, preferentially leucine, but not glutamic or aspartic acids.. Its function is as follows. Presumably involved in the processing and regular turnover of intracellular proteins. Catalyzes the removal of unsubstituted N-terminal amino acids from various peptides. The sequence is that of Probable cytosol aminopeptidase from Burkholderia multivorans (strain ATCC 17616 / 249).